Consider the following 508-residue polypeptide: UDP-N-acetylmuramyl-tripeptide synthetase (508 aa).

Residue S35 participates in UDP-N-acetyl-alpha-D-muramoyl-L-alanyl-D-glutamate binding. 118 to 124 contacts ATP; sequence GTDGKSS. UDP-N-acetyl-alpha-D-muramoyl-L-alanyl-D-glutamate-binding positions include 163-164, T190, and R200; that span reads ST. K232 carries the N6-carboxylysine modification.

It belongs to the MurCDEF family. MurE subfamily. In terms of processing, carboxylation is probably crucial for Mg(2+) binding and, consequently, for the gamma-phosphate positioning of ATP.

The protein resides in the cytoplasm. The protein operates within cell wall biogenesis; peptidoglycan biosynthesis. Functionally, catalyzes the addition of an amino acid to the nucleotide precursor UDP-N-acetylmuramoyl-L-alanyl-D-glutamate (UMAG) in the biosynthesis of bacterial cell-wall peptidoglycan. The sequence is that of UDP-N-acetylmuramyl-tripeptide synthetase from Borrelia garinii subsp. bavariensis (strain ATCC BAA-2496 / DSM 23469 / PBi) (Borreliella bavariensis).